The chain runs to 364 residues: tRNA 2-selenouridine synthase (364 aa).

The Rhodanese domain occupies 14 to 137 (LIADTPIIDV…LRQTAIQATI (124 aa)). Cys-97 serves as the catalytic S-selanylcysteine intermediate.

This sequence belongs to the SelU family. As to quaternary structure, monomer.

The enzyme catalyses 5-methylaminomethyl-2-thiouridine(34) in tRNA + selenophosphate + (2E)-geranyl diphosphate + H2O + H(+) = 5-methylaminomethyl-2-selenouridine(34) in tRNA + (2E)-thiogeraniol + phosphate + diphosphate. The catalysed reaction is 5-methylaminomethyl-2-thiouridine(34) in tRNA + (2E)-geranyl diphosphate = 5-methylaminomethyl-S-(2E)-geranyl-thiouridine(34) in tRNA + diphosphate. It carries out the reaction 5-methylaminomethyl-S-(2E)-geranyl-thiouridine(34) in tRNA + selenophosphate + H(+) = 5-methylaminomethyl-2-(Se-phospho)selenouridine(34) in tRNA + (2E)-thiogeraniol. It catalyses the reaction 5-methylaminomethyl-2-(Se-phospho)selenouridine(34) in tRNA + H2O = 5-methylaminomethyl-2-selenouridine(34) in tRNA + phosphate. In terms of biological role, involved in the post-transcriptional modification of the uridine at the wobble position (U34) of tRNA(Lys), tRNA(Glu) and tRNA(Gln). Catalyzes the conversion of 2-thiouridine (S2U-RNA) to 2-selenouridine (Se2U-RNA). Acts in a two-step process involving geranylation of 2-thiouridine (S2U) to S-geranyl-2-thiouridine (geS2U) and subsequent selenation of the latter derivative to 2-selenouridine (Se2U) in the tRNA chain. This is tRNA 2-selenouridine synthase from Escherichia fergusonii (strain ATCC 35469 / DSM 13698 / CCUG 18766 / IAM 14443 / JCM 21226 / LMG 7866 / NBRC 102419 / NCTC 12128 / CDC 0568-73).